The sequence spans 430 residues: 3-phosphoshikimate 1-carboxyvinyltransferase (430 aa).

Residues Lys21, Ser22, and Arg26 each coordinate 3-phosphoshikimate. Lys21 provides a ligand contact to phosphoenolpyruvate. Positions 94 and 122 each coordinate phosphoenolpyruvate. Residues Ser167, Gln169, Asp317, and Lys344 each coordinate 3-phosphoshikimate. Gln169 lines the phosphoenolpyruvate pocket. Residue Asp317 is the Proton acceptor of the active site. The phosphoenolpyruvate site is built by Arg348 and Arg390.

It belongs to the EPSP synthase family. In terms of assembly, monomer.

It localises to the cytoplasm. It catalyses the reaction 3-phosphoshikimate + phosphoenolpyruvate = 5-O-(1-carboxyvinyl)-3-phosphoshikimate + phosphate. Its pathway is metabolic intermediate biosynthesis; chorismate biosynthesis; chorismate from D-erythrose 4-phosphate and phosphoenolpyruvate: step 6/7. In terms of biological role, catalyzes the transfer of the enolpyruvyl moiety of phosphoenolpyruvate (PEP) to the 5-hydroxyl of shikimate-3-phosphate (S3P) to produce enolpyruvyl shikimate-3-phosphate and inorganic phosphate. This is 3-phosphoshikimate 1-carboxyvinyltransferase from Thermodesulfovibrio yellowstonii (strain ATCC 51303 / DSM 11347 / YP87).